We begin with the raw amino-acid sequence, 557 residues long: uncharacterized protein (557 aa).

Residues 70 to 224 (KVVEKMNGKA…FNLVSLLKPG (155 aa)) form the Helicase ATP-binding domain. An ATP-binding site is contributed by 82–90 (ADEVGLGKT). Residues 175–178 (DEAH) carry the DEAH box motif. The 162-residue stretch at 363-524 (QVVDLIKKID…NFEEHLHDIL (162 aa)) folds into the Helicase C-terminal domain.

The protein belongs to the SNF2/RAD54 helicase family.

This is an uncharacterized protein from Bacillus subtilis (strain 168).